Consider the following 160-residue polypeptide: MAVKIKLTRLGKIRNPQYRVIVADARTRRDGRSIEVIGRYHPKEEPSLIDINSERTQYWLSVGAKPTEPVLKLLKITGDWQKFKGLPGAEGRLKVAPPKPSKLELFNAALAVADGGPTTEATRPKKKVSAKKAAKAVESDAEGAKATKAYALAEGDEQSE.

Positions 115–139 (GGPTTEATRPKKKVSAKKAAKAVES) are disordered. The span at 124–134 (PKKKVSAKKAA) shows a compositional bias: basic residues.

This sequence belongs to the bacterial ribosomal protein bS16 family.

The chain is Small ribosomal subunit protein bS16 from Mycobacterium leprae (strain Br4923).